The primary structure comprises 456 residues: Glycosyl hydrolase family 109 protein 2 (456 aa).

Positions 1–33 (MSGFDRRSFLKASMVTAAATALAACASSERATG) form a signal peptide, tat-type signal. NAD(+)-binding positions include 63–64 (ER), Asp85, 134–137 (WAWH), 154–155 (EV), and Asn183. Substrate contacts are provided by residues Tyr212, Arg231, 243 to 246 (YPTH), and Tyr325. Tyr243 is an NAD(+) binding site.

Belongs to the Gfo/Idh/MocA family. Glycosyl hydrolase 109 subfamily. It depends on NAD(+) as a cofactor. In terms of processing, predicted to be exported by the Tat system. The position of the signal peptide cleavage has not been experimentally proven.

In terms of biological role, glycosidase. The chain is Glycosyl hydrolase family 109 protein 2 from Shewanella sp. (strain MR-4).